The sequence spans 424 residues: Glutamyl-tRNA(Gln) amidotransferase subunit D (424 aa).

The interval 58-79 is disordered; the sequence is NTNGGLNGGKEHKTAGEEVQKS. Positions 66 to 78 are enriched in basic and acidic residues; sequence GKEHKTAGEEVQK. Residues 84–406 enclose the Asparaginase/glutaminase domain; it reads PKVAILSTGG…LGQTDEFNEA (323 aa). Residues T94, T170, D171, and K247 contribute to the active site.

It belongs to the asparaginase 1 family. GatD subfamily. In terms of assembly, heterodimer of GatD and GatE.

It catalyses the reaction L-glutamyl-tRNA(Gln) + L-glutamine + ATP + H2O = L-glutaminyl-tRNA(Gln) + L-glutamate + ADP + phosphate + H(+). Its function is as follows. Allows the formation of correctly charged Gln-tRNA(Gln) through the transamidation of misacylated Glu-tRNA(Gln) in organisms which lack glutaminyl-tRNA synthetase. The reaction takes place in the presence of glutamine and ATP through an activated gamma-phospho-Glu-tRNA(Gln). The GatDE system is specific for glutamate and does not act on aspartate. In Methanosarcina barkeri (strain Fusaro / DSM 804), this protein is Glutamyl-tRNA(Gln) amidotransferase subunit D.